Consider the following 405-residue polypeptide: Phosphopentomutase (405 aa).

Residues D10, D305, H310, D346, H347, and H358 each contribute to the Mn(2+) site.

This sequence belongs to the phosphopentomutase family. It depends on Mn(2+) as a cofactor.

It localises to the cytoplasm. It catalyses the reaction 2-deoxy-alpha-D-ribose 1-phosphate = 2-deoxy-D-ribose 5-phosphate. The enzyme catalyses alpha-D-ribose 1-phosphate = D-ribose 5-phosphate. The protein operates within carbohydrate degradation; 2-deoxy-D-ribose 1-phosphate degradation; D-glyceraldehyde 3-phosphate and acetaldehyde from 2-deoxy-alpha-D-ribose 1-phosphate: step 1/2. Functionally, isomerase that catalyzes the conversion of deoxy-ribose 1-phosphate (dRib-1-P) and ribose 1-phosphate (Rib-1-P) to deoxy-ribose 5-phosphate (dRib-5-P) and ribose 5-phosphate (Rib-5-P), respectively. This chain is Phosphopentomutase, found in Methylobacterium sp. (strain 4-46).